The primary structure comprises 200 residues: Large ribosomal subunit protein bL25 (200 aa).

This sequence belongs to the bacterial ribosomal protein bL25 family. CTC subfamily. Part of the 50S ribosomal subunit; part of the 5S rRNA/L5/L18/L25 subcomplex. Contacts the 5S rRNA. Binds to the 5S rRNA independently of L5 and L18.

Functionally, this is one of the proteins that binds to the 5S RNA in the ribosome where it forms part of the central protuberance. The sequence is that of Large ribosomal subunit protein bL25 from Leifsonia xyli subsp. xyli (strain CTCB07).